Consider the following 352-residue polypeptide: Membrane progestin receptor alpha (352 aa).

Topologically, residues 1–75 (MATVVMEQIG…FLTLFQRHNE (75 aa)) are cytoplasmic. The helical transmembrane segment at 76 to 96 (TLNVWTHLLAAFIILVKWQEI) threads the bilayer. The Extracellular segment spans residues 97 to 110 (SETVDFLRDPHAQP). The chain crosses the membrane as a helical span at residues 111–131 (LFIVLLAAFTYLSFSALAHLL). Topologically, residues 132-139 (SAKSELSY) are cytoplasmic. A helical membrane pass occupies residues 140–160 (YTFYFLDYVGVAVYQYGSALA). At 161-175 (HYYYAIEKEWHTKVQ) the chain is on the extracellular side. Residues 176–196 (GLFLPAAAFLAWLTCFGCCYG) form a helical membrane-spanning segment. Residues 197 to 242 (KYASPELPKVANKLFQVVPSALAYCLDISPVVHRIYSCYQEGCSDP) are Cytoplasmic-facing. A helical transmembrane segment spans residues 243 to 263 (VVAYHFYHVVFFLIGAYFFCC). At 264–275 (PHPESLFPGKCD) the chain is on the extracellular side. Residues 276 to 296 (FIGQGHQLFHVFVVVCTLTQV) traverse the membrane as a helical segment. The Cytoplasmic portion of the chain corresponds to 297–316 (EALRTDFTERRPFYERLHGD). The chain crosses the membrane as a helical span at residues 317-337 (LAHDAVALFIFTACCSALTAF). Residues 338 to 352 (YVRQRVRASLHEKGE) lie on the Extracellular side of the membrane.

Belongs to the ADIPOR family. As to expression, strongly expressed in ovary and brain; lower expression in testis and pituitary. Not detected in heart, kidney, spleen, intestine, gill and muscle.

It localises to the cell membrane. Its function is as follows. Steroid membrane receptor. Binds progesterone, progestin and 17-hydroxyprogesterone in vitro. Capable of mediating progestin-induced oocyte maturation. The chain is Membrane progestin receptor alpha (mpra) from Cynoscion nebulosus (Spotted seatrout).